The primary structure comprises 437 residues: MSVSARSAAAEERSVNSSTMVAQQKNLEGYVGFANLPNQVYRKSVKRGFEFTLMVVGESGLGKSTLINSLFLTDLYSPEYPGPSHRIKKTVQVEQSKVLIKEGGVQLLLTIVDTPGFGDAVDNSNCWQPVIDYIDSKFEDYLNAESRVNRRQMPDNRVQCCLYFIAPSGHGLKPLDIEFMKRLHEKVNIIPLIAKADTLTPEECQQFKKQIMKEIQEHKIKIYEFPETDDEEENKLVKKIKDRLPLAVVGSNTIIEVNGKRVRGRQYPWGVAEVENGEHCDFTILRNMLIRTHMQDLKDVTNNVHYENYRSRKLAAVTYNGVDNNKNKGQLTKSPLAQMEEERREHVAKMKKMEMEMEQVFEMKVKEKVQKLKDSEAELQRRHEQMKKNLEAQHKELEEKRRQFEDEKANWEAQQRILEQQNSSRTLEKNKKKGKIF.

Ser-2 is subject to N-acetylserine. A Phosphotyrosine modification is found at Tyr-30. Residues 47–316 (RGFEFTLMVV…ENYRSRKLAA (270 aa)) enclose the Septin-type G domain. The interaction with SEPTIN12 stretch occupies residues 47 to 317 (RGFEFTLMVV…NYRSRKLAAV (271 aa)). A G1 motif region spans residues 57–64 (GESGLGKS). 57–64 (GESGLGKS) contributes to the GTP binding site. Ser-77 is modified (phosphoserine). GTP contacts are provided by residues Thr-90, Gly-116, and 195 to 203 (KADTLTPEE). A G3 motif region spans residues 113–116 (DTPG). The segment at 194 to 197 (AKAD) is G4 motif. Thr-228 carries the phosphothreonine modification. Gly-250 and Arg-265 together coordinate GTP. Residues 332–433 (TKSPLAQMEE…SRTLEKNKKK (102 aa)) are a coiled coil. Residue Ser-334 is modified to Phosphoserine. The residue at position 373 (Lys-373) is an N6-acetyllysine. Over residues 378-410 (ELQRRHEQMKKNLEAQHKELEEKRRQFEDEKAN) the composition is skewed to basic and acidic residues. Positions 378 to 437 (ELQRRHEQMKKNLEAQHKELEEKRRQFEDEKANWEAQQRILEQQNSSRTLEKNKKKGKIF) are disordered. Ser-424 bears the Phosphoserine mark. The residue at position 426 (Thr-426) is a Phosphothreonine.

This sequence belongs to the TRAFAC class TrmE-Era-EngA-EngB-Septin-like GTPase superfamily. Septin GTPase family. In terms of assembly, septins polymerize into heterooligomeric protein complexes that form filaments, and associate with cellular membranes, actin filaments and microtubules. GTPase activity is required for filament formation. Filaments are assembled from asymmetrical heterotrimers, composed of SEPTIN2, SEPTIN6 and SEPTIN7 that associate head-to-head to form a hexameric unit. Within the trimer, directly interacts with SEPTIN6, while interaction with SEPTIN2 seems indirect. In the absence of SEPTIN6, forms homodimers. Interacts directly with CENPE and links CENPE to septin filaments composed of SEPTIN2, SEPTIN6 and SEPTIN7. Interacts with SEPTIN5, SEPTIN8, SEPTIN9 and SEPTIN11. Component of a septin core octameric complex consisting of SEPTIN12, SEPTIN7, SEPTIN6 and SEPTIN2 or SEPTIN4 in the order 12-7-6-2-2-6-7-12 or 12-7-6-4-4-6-7-12 and located in the sperm annulus; the SEPTIN12:SEPTIN7 association is mediated by the respective GTP-binding domains.

The protein resides in the cytoplasm. Its subcellular location is the chromosome. The protein localises to the centromere. It localises to the kinetochore. It is found in the cytoskeleton. The protein resides in the spindle. Its subcellular location is the cleavage furrow. The protein localises to the midbody. It localises to the cilium axoneme. It is found in the cell projection. The protein resides in the cilium. Its subcellular location is the flagellum. Functionally, filament-forming cytoskeletal GTPase. Required for normal organization of the actin cytoskeleton. Required for normal progress through mitosis. Involved in cytokinesis. Required for normal association of CENPE with the kinetochore. Plays a role in ciliogenesis and collective cell movements. Forms a filamentous structure with SEPTIN12, SEPTIN6, SEPTIN2 and probably SEPTIN4 at the sperm annulus which is required for the structural integrity and motility of the sperm tail during postmeiotic differentiation. In Bos taurus (Bovine), this protein is Septin-7.